The sequence spans 319 residues: Ribonucleoside-diphosphate reductase small chain (319 aa).

The interval 313 to 319 (FSLDVDF) is interaction with R1.

This sequence belongs to the ribonucleoside diphosphate reductase small chain family. As to quaternary structure, interacts with RNR1/OPG080 subunit. Can interact with host RNR1 supunit. Requires Fe cation as cofactor.

It catalyses the reaction a 2'-deoxyribonucleoside 5'-diphosphate + [thioredoxin]-disulfide + H2O = a ribonucleoside 5'-diphosphate + [thioredoxin]-dithiol. Its function is as follows. Ribonucleoside-diphosphate reductase holoenzyme provides the precursors necessary for viral DNA synthesis. Allows virus growth in non-dividing cells. Catalyzes the biosynthesis of deoxyribonucleotides from the corresponding ribonucleotides. This Cynomys gunnisoni (Gunnison's prairie dog) protein is Ribonucleoside-diphosphate reductase small chain (OPG048).